Consider the following 240-residue polypeptide: TATA-box-binding protein (240 aa).

Residues asparagine 21–serine 61 are disordered. Residues glutamate 44–threonine 57 are compositionally biased toward basic and acidic residues. 2 repeat units span residues leucine 67–isoleucine 143 and isoleucine 157–leucine 234.

This sequence belongs to the TBP family. In terms of assembly, binds DNA as monomer. The 1.2 MDa TFIID complex is composed of TATA binding protein (TBP) and the 14 TBP-associated factors. One copy of each TAF1, TAF2, TAF3, TAF7, TAF8, TAF11, TAF13, two copies of each TAF4, TAF5, TAF6, TAF9, TAF10, TAF12, and three copies of TAF14. Interacts with TFC8.

The protein resides in the nucleus. In terms of biological role, general transcription factor that functions at the core of the DNA-binding general transcription factor complex TFIID. Binding of TFIID to a promoter (with or without TATA element) is the initial step in preinitiation complex (PIC) formation. TFIID plays a key role in the regulation of gene expression by RNA polymerase II through different activities such as transcription activator interaction, core promoter recognition and selectivity, TFIIA and TFIIB interaction, chromatin modification (histone acetylation by TAF1), facilitation of DNA opening and initiation of transcription. This Saccharomyces cerevisiae (strain ATCC 204508 / S288c) (Baker's yeast) protein is TATA-box-binding protein (SPT15).